The following is a 91-amino-acid chain: Islet amyloid polypeptide (91 aa).

The N-terminal stretch at 1 to 22 is a signal peptide; that stretch reads MGILKLPVVLIVLCVALNHLEG. The propeptide occupies 23–33; it reads GGKPTESHQME. C37 and C42 are joined by a disulfide. Y72 carries the post-translational modification Tyrosine amide. Residues 78 to 91 constitute a propeptide that is removed on maturation; the sequence is VEILKREPLSYLPI.

It belongs to the calcitonin family. As to quaternary structure, can form homodimers. Interacts with IDE and INS. Interaction with INS inhibits homodimerization and fibril formation.

It is found in the secreted. Functionally, amylin/IAPP is a glucoregulatory peptide hormone that plays an important role in the regulation of energy homeostasis. Selectively inhibits insulin-stimulated glucose utilization and glycogen deposition in muscle, while not affecting adipocyte glucose metabolism. IAPP function is mediated by the CALCR-RAMPs (AMYRs) receptor complexes. Amylin can also bind CALCR receptor in the absence of RAMPs, although it is more selective for AMYRs. The polypeptide is Islet amyloid polypeptide (IAPP) (Bos taurus (Bovine)).